Reading from the N-terminus, the 263-residue chain is tRNA dimethylallyltransferase (263 aa).

It belongs to the IPP transferase family. As to quaternary structure, monomer. The cofactor is Mg(2+).

The enzyme catalyses adenosine(37) in tRNA + dimethylallyl diphosphate = N(6)-dimethylallyladenosine(37) in tRNA + diphosphate. Functionally, catalyzes the transfer of a dimethylallyl group onto the adenine at position 37 in tRNAs that read codons beginning with uridine, leading to the formation of N6-(dimethylallyl)adenosine (i(6)A). The chain is tRNA dimethylallyltransferase from Leifsonia xyli subsp. xyli (strain CTCB07).